A 438-amino-acid chain; its full sequence is tRNA-2-methylthio-N(6)-dimethylallyladenosine synthase (438 aa).

An MTTase N-terminal domain is found at Lys-4–Ala-120. [4Fe-4S] cluster contacts are provided by Cys-13, Cys-49, Cys-83, Cys-158, Cys-162, and Cys-165. Positions Gly-144 to Glu-377 constitute a Radical SAM core domain. Residues Glu-377–Leu-438 enclose the TRAM domain.

Belongs to the methylthiotransferase family. MiaB subfamily. In terms of assembly, monomer. [4Fe-4S] cluster serves as cofactor.

The protein resides in the cytoplasm. The enzyme catalyses N(6)-dimethylallyladenosine(37) in tRNA + (sulfur carrier)-SH + AH2 + 2 S-adenosyl-L-methionine = 2-methylsulfanyl-N(6)-dimethylallyladenosine(37) in tRNA + (sulfur carrier)-H + 5'-deoxyadenosine + L-methionine + A + S-adenosyl-L-homocysteine + 2 H(+). Functionally, catalyzes the methylthiolation of N6-(dimethylallyl)adenosine (i(6)A), leading to the formation of 2-methylthio-N6-(dimethylallyl)adenosine (ms(2)i(6)A) at position 37 in tRNAs that read codons beginning with uridine. This chain is tRNA-2-methylthio-N(6)-dimethylallyladenosine synthase, found in Trichlorobacter lovleyi (strain ATCC BAA-1151 / DSM 17278 / SZ) (Geobacter lovleyi).